The primary structure comprises 251 residues: Imidazole glycerol phosphate synthase subunit HisF (251 aa).

Active-site residues include aspartate 11 and aspartate 130.

This sequence belongs to the HisA/HisF family. Heterodimer of HisH and HisF.

The protein resides in the cytoplasm. It carries out the reaction 5-[(5-phospho-1-deoxy-D-ribulos-1-ylimino)methylamino]-1-(5-phospho-beta-D-ribosyl)imidazole-4-carboxamide + L-glutamine = D-erythro-1-(imidazol-4-yl)glycerol 3-phosphate + 5-amino-1-(5-phospho-beta-D-ribosyl)imidazole-4-carboxamide + L-glutamate + H(+). It functions in the pathway amino-acid biosynthesis; L-histidine biosynthesis; L-histidine from 5-phospho-alpha-D-ribose 1-diphosphate: step 5/9. Functionally, IGPS catalyzes the conversion of PRFAR and glutamine to IGP, AICAR and glutamate. The HisF subunit catalyzes the cyclization activity that produces IGP and AICAR from PRFAR using the ammonia provided by the HisH subunit. This Streptococcus mutans serotype c (strain ATCC 700610 / UA159) protein is Imidazole glycerol phosphate synthase subunit HisF.